Reading from the N-terminus, the 555-residue chain is Transmembrane protein 87A (555 aa).

The N-terminal stretch at 1–21 (MAAAAWLQVLPVILLLLGAHP) is a signal peptide. Residues 22-225 (SPLSFFSAGP…YEYLTLEDYP (204 aa)) are Lumenal-facing. Disulfide bonds link Cys-74/Cys-128 and Cys-89/Cys-431. Residues Asn-79, Asn-127, Asn-157, and Asn-160 are each glycosylated (N-linked (GlcNAc...) asparagine). Residues 226–246 (LMIFFMVMCIVYVLFGVLWLA) form a helical membrane-spanning segment. Topologically, residues 247–257 (WSACYWRDLLR) are cytoplasmic. Residues 258–278 (IQFWIGAVIFLGMLEKAVFYA) form a helical membrane-spanning segment. Residues 279–305 (EFQNIRYKGESVQGALILAELLSAVKR) are Lumenal-facing. A helical transmembrane segment spans residues 306–322 (SLARTLVIIVSLGYGIV). The Cytoplasmic segment spans residues 323-325 (KPR). A helical membrane pass occupies residues 326–346 (LGVTLHKVVVAGALYLLFSGM). Topologically, residues 347 to 361 (EGVLRVTGAQTDLAS) are lumenal. A helical membrane pass occupies residues 362 to 382 (LAFIPLAFLDTALCWWIFISL). Over 383–403 (TQTMKLLKLRRNIVKLSLYRH) the chain is Cytoplasmic. The helical transmembrane segment at 404 to 424 (FTNTLILAVAASIVFIIWTTM) threads the bilayer. Topologically, residues 425-437 (KFRIVTCQSDWRE) are lumenal. Residues 438-458 (LWVDDAIWRLLFSMILFVIMV) traverse the membrane as a helical segment. Over 459–555 (LWRPSANNQR…ITHFERSKME (97 aa)) the chain is Cytoplasmic. The disordered stretch occupies residues 473 to 516 (PLSEEEEEDEQKEPMLKESFEGMKMRSTKQEPNGNSKVNKAQED). The segment covering 484 to 496 (KEPMLKESFEGMK) has biased composition (basic and acidic residues). The segment covering 502 to 511 (QEPNGNSKVN) has biased composition (polar residues). Position 540 is a phosphoserine (Ser-540).

Belongs to the LU7TM family. TMEM87 subfamily. As to quaternary structure, may interact with STOML3; STOML3 potentiates the mechanosensitive ion channel activity associated with TMEM87A.

It localises to the cell membrane. It is found in the golgi apparatus membrane. The protein resides in the cell projection. Its subcellular location is the ruffle. Functionally, potential monoatomic ion channel gated by mechanical force, implicated in normal touch sensitivity through the generation of mechanically activated currents. However, a direct channel activity is debated and an alternative could be that it functions as a chaperone for an unidentified mechanosensitive ion channel. Could also be involved in cell mechanosensitivity regulating cell adhesion and migration. May also be involved in retrograde transport from endosomes to the trans-Golgi network (TGN). The sequence is that of Transmembrane protein 87A from Homo sapiens (Human).